We begin with the raw amino-acid sequence, 409 residues long: Nucleoprotein (409 aa).

Disordered stretches follow at residues 1-32, 44-63, 120-145, and 164-193; these read MASG…SSGN, LNSP…ENLK, GADT…LRFS, and RSGR…SGAE. Residues 15–31 are compositionally biased toward low complexity; the sequence is PVIKLGGPKPPKVGSSG. The segment at 29–160 is RNA-binding; sequence SSGNASWFQA…GNFRWDFIPI (132 aa). Positions 31-156 constitute a CoV N NTD domain; it reads GNASWFQALK…GGPDGNFRWD (126 aa). The span at 164-179 shows a compositional bias: low complexity; that stretch reads RSGRSTAASSAASSRA. Residues 180–192 are compositionally biased toward basic and acidic residues; the sequence is PSRDGSRGRRSGA. At Ser-190 the chain carries Phosphoserine; by host. The CoV N CTD domain maps to 215–331; that stretch reads TKAKADEMAH…QCVDGVGTRP (117 aa). The tract at residues 226–333 is dimerization; that stretch reads RYCKRTIPPG…VDGVGTRPKD (108 aa). Cys-320 and Cys-323 form a disulfide bridge. Positions 327 to 409 are disordered; that stretch reads VGTRPKDDEP…GESALGENEL (83 aa). Residues 341 to 355 are compositionally biased toward polar residues; sequence RPNSRPATRTSSPAP. The span at 368-384 shows a compositional bias: basic and acidic residues; that stretch reads KQDDEVDKALTSDEERN. Thr-378 is modified (phosphothreonine; by host). At Ser-379 the chain carries Phosphoserine; by host.

This sequence belongs to the gammacoronavirus nucleocapsid protein family. As to quaternary structure, homooligomer. Both monomeric and oligomeric forms interact with RNA. Interacts with protein M. Interacts with NSP3; this interaction serves to tether the genome to the newly translated replicase-transcriptase complex at a very early stage of infection. In terms of processing, ADP-ribosylated. The ADP-ribosylation is retained in the virion during infection. Phosphorylated on serine and threonine residues.

The protein resides in the virion. Its subcellular location is the host endoplasmic reticulum-Golgi intermediate compartment. It localises to the host Golgi apparatus. Its function is as follows. Packages the positive strand viral genome RNA into a helical ribonucleocapsid (RNP) and plays a fundamental role during virion assembly through its interactions with the viral genome and membrane protein M. Plays an important role in enhancing the efficiency of subgenomic viral RNA transcription as well as viral replication. The sequence is that of Nucleoprotein from Avian infectious bronchitis virus (strain D1466) (IBV).